The primary structure comprises 123 residues: Small ribosomal subunit protein uS12 (123 aa).

Residue Asp-89 is modified to 3-methylthioaspartic acid. The tract at residues 100–123 (GSLDTSGVSDRKQGRSKYGTKRPK) is disordered. A compositionally biased stretch (basic residues) spans 113-123 (GRSKYGTKRPK).

Belongs to the universal ribosomal protein uS12 family. Part of the 30S ribosomal subunit. Contacts proteins S8 and S17. May interact with IF1 in the 30S initiation complex.

Functionally, with S4 and S5 plays an important role in translational accuracy. Interacts with and stabilizes bases of the 16S rRNA that are involved in tRNA selection in the A site and with the mRNA backbone. Located at the interface of the 30S and 50S subunits, it traverses the body of the 30S subunit contacting proteins on the other side and probably holding the rRNA structure together. The combined cluster of proteins S8, S12 and S17 appears to hold together the shoulder and platform of the 30S subunit. In Saccharophagus degradans (strain 2-40 / ATCC 43961 / DSM 17024), this protein is Small ribosomal subunit protein uS12.